The following is a 107-amino-acid chain: RecQ-mediated genome instability protein 2 homolog (107 aa).

Belongs to the RMI2 family. As to quaternary structure, component of the RMI complex, containing at least top-3, rmh-1 and rmh-2. Component of the BTR double Holliday Junction dissolution complex composed of at least him-6, top-3, rmh-1 and rmif-2, which is involved in double strand break repair in the germline. Interacts with rmh-1; the interaction is direct and is required for mutual stability and localization at nuclear foci. As to expression, expressed in the germline.

It localises to the nucleus. Functionally, essential component of the RMI complex, a complex that plays an important role in the processing of homologous recombination intermediates. Component of the BTR double Holliday Junction dissolution complex, which is involved in homologous recombination during meiotic double strand break in the germline. Plays a role in double strand break repair by positively regulating the accumulation of rad-51 at double strand breaks. Stabilizes and positively regulates the localization of the BTR double Holliday Junction dissolution complex components rmh-1, him-6 and top-3 at nuclear foci during meiotic recombination. Positively regulates meiotic recombination, chiasma formation, and chromosome segregation in meiosis. Positively regulates DNA crossover formation and positioning on chromosome arms (away from the chromosome center) during homologous recombination. This Caenorhabditis elegans protein is RecQ-mediated genome instability protein 2 homolog.